We begin with the raw amino-acid sequence, 215 residues long: Adenylate kinase (215 aa).

Residue 10-15 participates in ATP binding; sequence GTGKGT. Residues 30 to 59 are NMP; sequence STGHILRKISTKKTLFGEKIKNIINSGKLV. Residues threonine 31, arginine 36, 57–59, 85–88, and glutamine 92 contribute to the AMP site; these read KLV and GFPR. Residues 122-157 are LID; it reads TRTINPITGTIYNNVIQKNSELKNLKINTLKSRLDD. Residues arginine 123 and 132-133 each bind ATP; that span reads IY. 2 residues coordinate AMP: arginine 154 and arginine 165. ATP is bound at residue asparagine 198.

Belongs to the adenylate kinase family. Monomer.

It localises to the cytoplasm. The catalysed reaction is AMP + ATP = 2 ADP. It functions in the pathway purine metabolism; AMP biosynthesis via salvage pathway; AMP from ADP: step 1/1. Catalyzes the reversible transfer of the terminal phosphate group between ATP and AMP. Plays an important role in cellular energy homeostasis and in adenine nucleotide metabolism. This chain is Adenylate kinase, found in Buchnera aphidicola subsp. Baizongia pistaciae (strain Bp).